Reading from the N-terminus, the 382-residue chain is Aminotransferase FGSG_00049 (382 aa).

Pyridoxal 5'-phosphate is bound at residue Arg80. Lys181 bears the N6-(pyridoxal phosphate)lysine mark. Glu217 is a pyridoxal 5'-phosphate binding site.

This sequence belongs to the class-IV pyridoxal-phosphate-dependent aminotransferase family. The cofactor is pyridoxal 5'-phosphate.

It participates in mycotoxin biosynthesis. Functionally, aminotransferase; part of the gene cluster that mediates the biosynthesis of gramillins A and B, bicyclic lipopeptides that induce cell death in maize leaves but not in wheat leaves. The nonribosomal peptide synthetase GRA1 incorporates respectively a glutamic adic (Glu), a leucine (Leu), a serine (Ser), a hydroxyglutamine (HOGln), a 2-amino decanoic acid, and 2 cysteins (CysB and CysA). The biosynthesis of 2-amino decanoic acid incorporated in gramillins could be initiated by a fatty acid synthase composed of the alpha and beta subunits FGSG_00036 and FGSG_11656. The cytochrome P450 monooxygenase FGSG_15680 could hydroxylate the fatty acid chain. Subsequent oxidation to the ketone by the oxidoreductase FGSG_00048 and transamination by aminotransferase FGSG_00049 could form 2-amino-decanoic acid. On the other hand, FGSG_15680 could also be responsible for the HO-modified glutamine at the gamma-position. Whether hydroxylation occurs on the fully assembled product or on the Gln residue prior to assembly into the gramillins requires further proof. The thioredoxin FGSG_00043 could also be required for the disulfide-bond formation between CysA and CysB. The specific involvement of the remaining proteins from the cluster is more difficult to discern, but could have broader regulatory (FGSG_00040 and FGSG_11657) or enzymatic functions (FGSG_00044 and FGSG_00045). The final C-domain of GRA1 does not possess the expected sequence of a termination CT domain, often implicated in macrocyclization and release of a cyclopeptidein fungal NRPs; and the thioesterase FGSG_00047 may act in concert with the terminal C-domain of GRA1 to catalyze the formation of the macrocyclic anhydride and release of the products. This Gibberella zeae (strain ATCC MYA-4620 / CBS 123657 / FGSC 9075 / NRRL 31084 / PH-1) (Wheat head blight fungus) protein is Aminotransferase FGSG_00049.